The sequence spans 512 residues: 2,3-bisphosphoglycerate-independent phosphoglycerate mutase (512 aa).

Residues Asp11 and Ser61 each coordinate Mn(2+). The active-site Phosphoserine intermediate is the Ser61. Substrate is bound by residues His122, 152–153 (RD), Arg184, Arg190, 259–262 (RADR), and Lys332. 5 residues coordinate Mn(2+): Asp399, His403, Asp440, His441, and His459.

Belongs to the BPG-independent phosphoglycerate mutase family. Monomer. Mn(2+) is required as a cofactor.

The catalysed reaction is (2R)-2-phosphoglycerate = (2R)-3-phosphoglycerate. It functions in the pathway carbohydrate degradation; glycolysis; pyruvate from D-glyceraldehyde 3-phosphate: step 3/5. Its function is as follows. Catalyzes the interconversion of 2-phosphoglycerate and 3-phosphoglycerate. This chain is 2,3-bisphosphoglycerate-independent phosphoglycerate mutase, found in Francisella tularensis subsp. tularensis (strain FSC 198).